Here is a 209-residue protein sequence, read N- to C-terminus: Shikimate kinase (209 aa).

47–52 (GAGKTT) contacts ATP. T51 lines the Mg(2+) pocket. Residues D69, R93, and G115 each contribute to the substrate site. R153 is an ATP binding site. R172 is a binding site for substrate.

Belongs to the shikimate kinase family. Monomer. Requires Mg(2+) as cofactor.

The protein resides in the cytoplasm. The enzyme catalyses shikimate + ATP = 3-phosphoshikimate + ADP + H(+). The protein operates within metabolic intermediate biosynthesis; chorismate biosynthesis; chorismate from D-erythrose 4-phosphate and phosphoenolpyruvate: step 5/7. In terms of biological role, catalyzes the specific phosphorylation of the 3-hydroxyl group of shikimic acid using ATP as a cosubstrate. This chain is Shikimate kinase, found in Bordetella avium (strain 197N).